A 376-amino-acid chain; its full sequence is Ribonucleoside-diphosphate reductase subunit beta (376 aa).

The Fe cation site is built by aspartate 85, glutamate 116, and histidine 119. Residue tyrosine 123 is part of the active site. Positions 205, 239, and 242 each coordinate Fe cation.

The protein belongs to the ribonucleoside diphosphate reductase small chain family. As to quaternary structure, tetramer of two alpha and two beta subunits. Fe cation serves as cofactor.

The enzyme catalyses a 2'-deoxyribonucleoside 5'-diphosphate + [thioredoxin]-disulfide + H2O = a ribonucleoside 5'-diphosphate + [thioredoxin]-dithiol. Functionally, provides the precursors necessary for DNA synthesis. Catalyzes the biosynthesis of deoxyribonucleotides from the corresponding ribonucleotides. This is Ribonucleoside-diphosphate reductase subunit beta (nrdB) from Haemophilus influenzae (strain ATCC 51907 / DSM 11121 / KW20 / Rd).